We begin with the raw amino-acid sequence, 270 residues long: 3-methyl-2-oxobutanoate hydroxymethyltransferase (270 aa).

Mg(2+)-binding residues include aspartate 50 and aspartate 89. Residues 50–51 (DS), aspartate 89, and lysine 118 contribute to the 3-methyl-2-oxobutanoate site. Glutamate 120 is a binding site for Mg(2+). Glutamate 187 functions as the Proton acceptor in the catalytic mechanism.

This sequence belongs to the PanB family. In terms of assembly, homodecamer; pentamer of dimers. Mg(2+) serves as cofactor.

It localises to the cytoplasm. It carries out the reaction 3-methyl-2-oxobutanoate + (6R)-5,10-methylene-5,6,7,8-tetrahydrofolate + H2O = 2-dehydropantoate + (6S)-5,6,7,8-tetrahydrofolate. It participates in cofactor biosynthesis; (R)-pantothenate biosynthesis; (R)-pantoate from 3-methyl-2-oxobutanoate: step 1/2. In terms of biological role, catalyzes the reversible reaction in which hydroxymethyl group from 5,10-methylenetetrahydrofolate is transferred onto alpha-ketoisovalerate to form ketopantoate. This Helicobacter pylori (strain G27) protein is 3-methyl-2-oxobutanoate hydroxymethyltransferase.